The following is a 1326-amino-acid chain: MNRRYALSLSGALLASSCMTVLVAVPVARAQQASTAVTSTAASPAAAPRQILLQQARFWLQQQQYDNARQALQNAQRIAPDAPDVLEVEGEYQAAVGNREAAADTLRHLQQVAPASTAVSNLSDLLSERAISQSDLSQIRSLAGSGQNAQAVAGYQKLFHGGKPPRSLAVEYYQTMAGVPTQWDQARAGLAGIVASNPQNYRAQLAFAQALTYNTSTRMEGLTRLKDLQSFQSQAPVEAAAATQSYRQTLSWLPVNPDTQPLMEQWLSAHPNDAALREHMLHPPGGPPDKAGLARQAGYQQLNAGRLSAAEQSFQSALQINSHDADSLGGMGLVSMRQGDTAEAHRYFEEAMAADPKTADRWRPALAGMAVSGDYAAVRQLIAAHQYTEAKQKLATLARQPGQYTGATLMLADLQRSTGQVAAAEQEYRGILSREPNNQLALMGLARVDMAQGNTAEARQLLSRVSPQYASQVGEIEVSGLMAAASQTSDSARKVSILREAMAQAPRDPWVRINLANALQQQGDVAEAGRVMQPILANPVTAQDRQAGILYTYGSGNDAMTRQLLAGLSPADYSPAIRSIAEEMEIKQDLASRLSMVSNPVPLIREALSQPDPTGARGVAVADLFRQRGDMVHARMALRIASTRTIDLSPDQRLSYATEYMKISNPVAAARLLAPLGDGTGSGAGNALLPEQMQTLQQLRMGISVAQSDLLNQRGDQAQAYDHLAPALQADPEATSPKLALARLYNGHGKPGKALEIDLAVLRHNPQDLDARQAAVQAAVNSNHNSLATRLAMDGVQESPMDARAWLAMAVADQADGHGQRTIEDLRRAYDLRLQQVEGTRAASGPVGAHEEALAPPSTNPFQSRGYGHQVELGAPVTGGSYSAEAASPDTSDQMLSSIAGQIHTLRENLAPSIDGGLGFRSRSGEHGMGRLTEANIPIVGRLPLQAGASALTFSITPTMIWSGQLNTGSVYDVPRYGTFMATQAANQCAGHSSCGGLDFLSANHTQRIAAGAGEAGFAPDVQFGNSWVRADVCASPIGFPITNVLGGVEFSPRVGPVTFRVSAERRSITNSVLSYGGLRDPNYNSEVGRYARQVYGHDLTKQWGSEWGGVVTNHFHGQVEATLGNTILYGGGGYAIQTGKNVQRNSEREAGIGANTLVWHNANMLVRIGVSLTYFGYAHNEDFYTYGQGGYFSPQSYYAATVPVRYAGQHKRLDWDVTGSVGYQVFHEHAAPFFPTSSLLQSGANYVASNFVQNALPTDYLSQETVNSAYYPGDSIAGLTGGFNARVGYRFTRNVRLDLSGRYQKAGNWTESGAMISAHYLIMDQ.

Positions M1–A30 are cleaved as a signal peptide. TPR repeat units lie at residues R49–A82, A291–D324, A325–T358, T405–N438, N557–L590, and M701–A734. Residues R841–Y867 form a disordered region.

It belongs to the AcsC/BcsC family.

The protein resides in the cell outer membrane. Its pathway is glycan metabolism; bacterial cellulose biosynthesis. Its function is as follows. Required for maximal bacterial cellulose synthesis. It may be involved in the formation of a membrane complex for extrusion of the cellulose product. The polypeptide is Cellulose synthase operon protein C (bcsC) (Komagataeibacter sucrofermentans (strain ATCC 700178 / DSM 15973 / CECT 7291 / JCM 9730 / LMG 18788 / BPR 2001) (Acetobacter xylinus subsp. sucrofermentans)).